The primary structure comprises 153 residues: Sec-independent protein translocase protein TatB (153 aa).

The chain crosses the membrane as a helical span at residues 1–21 (MFGISFSELLLVGLVALLVLG). The interval 78–153 (MFAQNQHPET…HDSSLPPRAP (76 aa)) is disordered.

The protein belongs to the TatB family. In terms of assembly, the Tat system comprises two distinct complexes: a TatABC complex, containing multiple copies of TatA, TatB and TatC subunits, and a separate TatA complex, containing only TatA subunits. Substrates initially bind to the TatABC complex, which probably triggers association of the separate TatA complex to form the active translocon.

The protein resides in the cell inner membrane. Functionally, part of the twin-arginine translocation (Tat) system that transports large folded proteins containing a characteristic twin-arginine motif in their signal peptide across membranes. Together with TatC, TatB is part of a receptor directly interacting with Tat signal peptides. TatB may form an oligomeric binding site that transiently accommodates folded Tat precursor proteins before their translocation. The sequence is that of Sec-independent protein translocase protein TatB from Pseudomonas savastanoi pv. phaseolicola (strain 1448A / Race 6) (Pseudomonas syringae pv. phaseolicola (strain 1448A / Race 6)).